The chain runs to 335 residues: Glutamyl-tRNA reductase (335 aa).

Substrate-binding positions include 60–63 (TCHR), Ser110, 115–117 (ETE), and Gln121. The Nucleophile role is filled by Cys61. An NADP(+)-binding site is contributed by 189–194 (GYSEIN).

This sequence belongs to the glutamyl-tRNA reductase family. Homodimer.

It carries out the reaction (S)-4-amino-5-oxopentanoate + tRNA(Glu) + NADP(+) = L-glutamyl-tRNA(Glu) + NADPH + H(+). It participates in porphyrin-containing compound metabolism; protoporphyrin-IX biosynthesis; 5-aminolevulinate from L-glutamyl-tRNA(Glu): step 1/2. Functionally, catalyzes the NADPH-dependent reduction of glutamyl-tRNA(Glu) to glutamate 1-semialdehyde (GSA). This Chlamydia trachomatis serovar D (strain ATCC VR-885 / DSM 19411 / UW-3/Cx) protein is Glutamyl-tRNA reductase.